A 355-amino-acid chain; its full sequence is Alanine racemase (355 aa).

Lys34 functions as the Proton acceptor; specific for D-alanine in the catalytic mechanism. Lys34 is modified (N6-(pyridoxal phosphate)lysine). A substrate-binding site is contributed by Arg133. Tyr249 acts as the Proton acceptor; specific for L-alanine in catalysis. Met297 is a binding site for substrate.

The protein belongs to the alanine racemase family. The cofactor is pyridoxal 5'-phosphate.

It catalyses the reaction L-alanine = D-alanine. The protein operates within amino-acid biosynthesis; D-alanine biosynthesis; D-alanine from L-alanine: step 1/1. Its function is as follows. Catalyzes the interconversion of L-alanine and D-alanine. May also act on other amino acids. The protein is Alanine racemase (alr) of Rickettsia peacockii (strain Rustic).